The following is a 4545-amino-acid chain: Prolow-density lipoprotein receptor-related protein 1 (4545 aa).

An N-terminal signal peptide occupies residues 1-19 (MLTPPLLLLLPLLSALVSG). Residues 20–4424 (ATMDAPKTCS…SQQQPGHMAS (4405 aa)) lie on the Extracellular side of the membrane. 2 LDL-receptor class A domains span residues 26 to 67 (KTCS…ICPQ) and 71 to 111 (QRCP…HCRE). 6 disulfide bridges follow: Cys28–Cys41, Cys35–Cys54, Cys48–Cys65, Cys73–Cys86, Cys80–Cys99, and Cys93–Cys109. In terms of domain architecture, EGF-like 1 spans 112–150 (LRANCSRMGCQHHCVPTPSGPTCYCNSSFQLQADGKTCK). Asn115 carries N-linked (GlcNAc...) asparagine glycosylation. Cystine bridges form between Cys116/Cys125, Cys121/Cys134, Cys136/Cys149, Cys155/Cys165, Cys161/Cys174, and Cys176/Cys189. Asn137 carries an N-linked (GlcNAc...) asparagine glycan. Positions 151–190 (DFDECSVYGTCSQLCTNTDGSFTCGCVEGYLLQPDNRSCK) constitute an EGF-like 2; calcium-binding domain. Asn186, Asn240, and Asn275 each carry an N-linked (GlcNAc...) asparagine glycan. 3 LDL-receptor class B repeats span residues 293–335 (GNFY…DPAM), 336–379 (GKVF…DLVS), and 380–423 (RLVY…FENY). Asn358 carries N-linked (GlcNAc...) asparagine glycosylation. Residue Asn447 is glycosylated (N-linked (GlcNAc...) asparagine). One can recognise an EGF-like 3 domain in the interval 475 to 521 (RSHACENDQYGKPGGCSDICLLANSHKARTCRCRSGFSLGSDGKSCK). 3 disulfide bridges follow: Cys479–Cys494, Cys490–Cys505, and Cys507–Cys520. 4 LDL-receptor class B repeats span residues 572 to 614 (GFIY…DWMG), 615 to 660 (DNLY…DPLN), 661 to 711 (GWMY…DIPA), and 712 to 755 (GRLY…HGNY). Asn730 is a glycosylation site (N-linked (GlcNAc...) asparagine). The 41-residue stretch at 804–844 (GTNKCRVNNGGCSSLCLATPGSRQCACAEDQVLDTDGVTCL) folds into the EGF-like 4 domain. Intrachain disulfides connect Cys808–Cys819, Cys815–Cys828, Cys830–Cys843, Cys855–Cys867, Cys862–Cys880, Cys874–Cys891, Cys896–Cys908, Cys903–Cys921, Cys915–Cys932, Cys937–Cys949, Cys944–Cys962, Cys956–Cys972, Cys977–Cys990, Cys985–Cys1003, Cys997–Cys1012, Cys1016–Cys1028, Cys1023–Cys1041, Cys1035–Cys1052, Cys1063–Cys1076, Cys1070–Cys1089, Cys1083–Cys1098, Cys1105–Cys1119, Cys1113–Cys1132, Cys1126–Cys1141, Cys1146–Cys1160, Cys1153–Cys1173, Cys1167–Cys1183, Cys1186–Cys1197, Cys1193–Cys1207, Cys1209–Cys1222, Cys1228–Cys1238, Cys1234–Cys1247, and Cys1249–Cys1262. LDL-receptor class A domains follow at residues 853 to 893 (PQCQ…LCHQ), 894 to 934 (HTCP…TCSA), 935 to 974 (RTCPPNQFSCASGRCIPISWTCDLDDDCGDRSDESASCAY), 975 to 1014 (PTCFPLTQFTCNNGRCININWRCDNDNDCGDNSDEAGCSH), 1014 to 1054 (HSCS…NCTN), 1061 to 1100 (GGCHSDEFQCRLDGLCIPLRWRCDGDTDCMDSSDEKSCEG), 1103 to 1143 (HVCD…NCEA), and 1144 to 1183 (LACRPPSHPCANNTSVCLPPDKLCDGKDDCGDGSDEGELC). Ca(2+)-binding residues include Trp872, Asp875, Asp877, Asp879, Asp885, and Glu886. N-linked (GlcNAc...) asparagine glycosylation occurs at Asn929. 6 residues coordinate Ca(2+): Trp1033, Asp1036, Asp1038, Asp1040, Asp1046, and Glu1047. N-linked (GlcNAc...) asparagine glycosylation occurs at Asn1051. The Ca(2+) site is built by Trp1081, Asp1084, Asp1086, Asp1088, Asp1094, and Glu1095. Residues Asn1155 and Asn1156 are each glycosylated (N-linked (GlcNAc...) asparagine). 2 consecutive EGF-like domains span residues 1184–1223 (DQCSLNNGGCSHNCSVAPGEGIVCSCPLGMELGSDNHTCQ) and 1224–1263 (IQSYCAKHLKCSQKCDQNKFSVKCSCYEGWVLEPDGESCR). N-linked (GlcNAc...) asparagine glycosylation is found at Asn1196 and Asn1219. LDL-receptor class B repeat units lie at residues 1310–1356 (SALY…DWIA), 1357–1399 (GNIY…DPRD), 1400–1446 (GILF…DYLE), 1447–1491 (KRIL…YGGE), and 1492–1532 (VYWT…YHPS). A glycan (N-linked (GlcNAc...) asparagine) is linked at Asn1512. Positions 1537 to 1580 (APNPCEANGGRGPCSHLCLINYNRTVSCACPHLMKLHKDNTTCY) constitute an EGF-like 7 domain. Intrachain disulfides connect Cys1541–Cys1554, Cys1550–Cys1564, and Cys1566–Cys1579. N-linked (GlcNAc...) asparagine glycans are attached at residues Asn1559, Asn1576, Asn1617, and Asn1646. 4 LDL-receptor class B repeats span residues 1628-1670 (QRVY…DWVS), 1671-1714 (RNLF…HPLR), 1715-1754 (GKLYWTDGDNISMANMDGSNHTLLFSGQKGPVGLAIDFPE), and 1755-1799 (SKLY…MGDK). 4 N-linked (GlcNAc...) asparagine glycosylation sites follow: Asn1724, Asn1734, Asn1764, and Asn1826. Residues 1847 to 1888 (GTNPCSVNNGDCSQLCLPTSETTRSCMCTAGYSLRSGQQACE) form the EGF-like 8 domain. Disulfide bonds link Cys1851-Cys1862, Cys1858-Cys1872, and Cys1874-Cys1887. Asn1934 is a glycosylation site (N-linked (GlcNAc...) asparagine). LDL-receptor class B repeat units follow at residues 1935–1977 (DTIY…DWIA), 1978–2020 (GNIY…HPEK), 2021–2064 (GYLF…DYQG), and 2065–2108 (GKLY…FEDF). The N-linked (GlcNAc...) asparagine glycan is linked to Asn1996. Lys2010 is modified (N6-acetyllysine). N-linked (GlcNAc...) asparagine glycosylation occurs at Asn2049. 2 N-linked (GlcNAc...) asparagine glycosylation sites follow: Asn2118 and Asn2128. An EGF-like 9 domain is found at 2156 to 2196 (GTNVCAVANGGCQQLCLYRGGGQRACACAHGMLAEDGASCR). Cystine bridges form between Cys2160–Cys2171, Cys2167–Cys2181, and Cys2183–Cys2195. LDL-receptor class B repeat units follow at residues 2254–2295 (NRIF…HRGW), 2296–2344 (DTLY…DECQ), 2345–2389 (NLMF…DHRA), 2390–2432 (EKLY…YGEH), and 2433–2474 (IFWT…VAND). Residue Asn2473 is glycosylated (N-linked (GlcNAc...) asparagine). The EGF-like 10 domain maps to 2479–2519 (ELSPCRINNGGCQDLCLLTHQGHVNCSCRGGRILQEDFTCR). 3 disulfide bridges follow: Cys2483-Cys2494, Cys2490-Cys2504, and Cys2506-Cys2518. The N-linked (GlcNAc...) asparagine glycan is linked to Asn2503. N-linked (GlcNAc...) asparagine glycosylation occurs at Asn2522. 7 consecutive LDL-receptor class A domains span residues 2523–2564 (SSCR…YCNS), 2565–2603 (RRCKKTFRQCNNGRCVSNMLWCNGVDDCGDGSDEIPCNK), 2604–2642 (TACGVGEFRCRDGSCIGNSSRCNQFVDCEDASDEMNCSA), 2643–2691 (TDCS…DCPG), 2695–2733 (PRCPLNYFACPSGRCIPMSWTCDKEDDCENGEDETHCNK), 2733–2772 (KFCSEAQFECQNHRCISKQWLCDGSDDCGDGSDEAAHCEG), and 2773–2815 (KTCG…GCLY). 6 disulfides stabilise this stretch: Cys2525–Cys2538, Cys2533–Cys2551, Cys2545–Cys2562, Cys2567–Cys2579, Cys2574–Cys2592, and Cys2586–Cys2601. Asn2602 is a glycosylation site (N-linked (GlcNAc...) asparagine). 15 disulfides stabilise this stretch: Cys2606–Cys2618, Cys2613–Cys2631, Cys2625–Cys2640, Cys2645–Cys2667, Cys2661–Cys2680, Cys2674–Cys2689, Cys2697–Cys2709, Cys2704–Cys2722, Cys2716–Cys2731, Cys2735–Cys2747, Cys2742–Cys2760, Cys2754–Cys2770, Cys2775–Cys2788, Cys2782–Cys2801, and Cys2795–Cys2813. N-linked (GlcNAc...) asparagine glycosylation is found at Asn2621 and Asn2639. An N-linked (GlcNAc...) asparagine glycan is attached at Asn2816. 3 consecutive LDL-receptor class A domains span residues 2817–2856 (STCDDREFMCQNRLCIPKHFVCDHDRDCADGSDESPECEY), 2857–2900 (PTCG…HCTS), and 2903–2941 (HKCNASSQFLCSSGRCVAEALLCNGQDDCGDGSDERGCH). 15 disulfides stabilise this stretch: Cys2819-Cys2831, Cys2826-Cys2844, Cys2838-Cys2854, Cys2859-Cys2871, Cys2866-Cys2885, Cys2879-Cys2898, Cys2905-Cys2918, Cys2913-Cys2931, Cys2925-Cys2940, Cys2945-Cys2957, Cys2953-Cys2966, Cys2968-Cys2981, Cys2987-Cys2997, Cys2993-Cys3006, and Cys3008-Cys3022. Asn2906 carries an N-linked (GlcNAc...) asparagine glycan. One can recognise an EGF-like 11 domain in the interval 2942–2982 (VNECLSRKLSGCSQDCEDLKIGFKCRCRPGFRLKDDGRTCA). Positions 2983–3023 (DLDECSTTFPCSQLCINTHGSYKCLCVEGYAPRGGDPHSCK) constitute an EGF-like 12; calcium-binding domain. Asn3049 and Asn3090 each carry an N-linked (GlcNAc...) asparagine glycan. LDL-receptor class B repeat units lie at residues 3070–3114 (QMIY…DWVG), 3115–3157 (GNLY…DVQN), 3158–3201 (GYLY…DYVT), 3202–3244 (ERIY…FEDY), and 3245–3285 (VYWT…FHAL). N-linked (GlcNAc...) asparagine glycosylation is present at Asn3265. The 42-residue stretch at 3291–3332 (PNHPCKVNNGGCSNLCLLSPGGGHKCACPTNFYLGGDGRTCV) folds into the EGF-like 13 domain. 3 disulfides stabilise this stretch: Cys3295/Cys3306, Cys3302/Cys3316, and Cys3318/Cys3331. LDL-receptor class A domains lie at 3333-3372 (SNCTASQFVCKNDKCIPFWWKCDTEDDCGDHSDEPPDCPE), 3373-3411 (FKCRPGQFQCSTGICTNPAFICDGDNDCQDNSDEANCDI), 3412-3451 (HVCLPSQFKCTNTNRCIPGIFRCNGQDNCGDGEDERDCPE), 3452-3492 (VTCA…NCTQ), 3493-3534 (MTCG…ECDE), 3535-3573 (RTCEPYQFRCKNNRCVPGRWQCDYDNDCGDNSDEESCTP), 3574-3612 (RPCSESEFSCANGRCIAGRWKCDGDHDCADGSDEKDCTP), 3612-3650 (PRCDMDQFQCKSGHCIPLRWRCDADADCMDGSDEEACGT), 3653-3693 (RTCP…ECAR), 3694-3734 (FICP…DCEP), and 3740-3779 (PHCKDKKEFLCRNQRCLSSSLRCNMFDDCGDGSDEEDCSI). The N-linked (GlcNAc...) asparagine glycan is linked to Asn3334. Disulfide bonds link Cys3335-Cys3347, Cys3342-Cys3360, Cys3354-Cys3370, Cys3375-Cys3387, Cys3382-Cys3400, Cys3394-Cys3409, Cys3414-Cys3427, Cys3421-Cys3440, Cys3434-Cys3449, Cys3454-Cys3467, Cys3461-Cys3480, Cys3474-Cys3490, Cys3495-Cys3508, Cys3502-Cys3521, Cys3515-Cys3532, Cys3537-Cys3549, Cys3544-Cys3562, Cys3556-Cys3571, Cys3576-Cys3588, Cys3583-Cys3601, Cys3595-Cys3610, Cys3614-Cys3626, Cys3621-Cys3639, Cys3633-Cys3648, Cys3655-Cys3667, Cys3662-Cys3680, Cys3674-Cys3691, Cys3696-Cys3710, Cys3704-Cys3723, Cys3717-Cys3732, Cys3742-Cys3755, Cys3750-Cys3768, Cys3762-Cys3777, Cys3786-Cys3799, Cys3793-Cys3808, Cys3810-Cys3823, Cys3829-Cys3839, Cys3835-Cys3848, and Cys3850-Cys3861. N-linked (GlcNAc...) asparagine glycosylation occurs at Asn3489. N-linked (GlcNAc...) asparagine glycosylation occurs at Asn3663. 2 EGF-like domains span residues 3782–3824 (KLTS…PGCQ) and 3825–3862 (DINECLRFGTCSQLCNNTKGGHLCSCARNFMKTHNTCK). Asn3789 carries N-linked (GlcNAc...) asparagine glycosylation. The N-linked (GlcNAc...) asparagine glycan is linked to Asn3840. LDL-receptor class B repeat units lie at residues 3913–3955 (GRVY…HLNI), 3971–4013 (GNVY…DPLR), 4014–4057 (GTMY…DYHN), and 4058–4102 (ERLY…FEDY). The short motif at 3941 to 3944 (RHRR) is the Recognition site for proteolytical processing element. N-linked (GlcNAc...) asparagine glycosylation is present at Asn3954. Asn4076 and Asn4126 each carry an N-linked (GlcNAc...) asparagine glycan. EGF-like domains follow at residues 4148 to 4184 (VTNPCDRKKCEWLCLLSPSGPVCTCPNGKRLDNGTCV), 4197 to 4233 (RPGTCTLQCFNGGSCFLNARRQPKCRCQPRYTGDKCE), 4233 to 4269 (ELDQCWEYCHNGGTCAASPSGMPTCRCPTGFTGPKCT), 4269 to 4305 (TAQVCAGYCSNNSTCTVNQGNQPQCRCLPGFLGDRCQ), 4305 to 4341 (QYRQCSGFCENFGTCQMAADGSRQCRCTVYFEGPRCE), 4341 to 4376 (EVNKCSRCLQGACVVNKQTGDVTCNCTDGRVAPSCL), and 4374 to 4410 (SCLTCIDHCSNGGSCTMNSKMMPECQCPPHMTGPRCE). 17 cysteine pairs are disulfide-bonded: Cys4152-Cys4161, Cys4157-Cys4170, Cys4172-Cys4183, Cys4201-Cys4211, Cys4205-Cys4221, Cys4223-Cys4232, Cys4237-Cys4247, Cys4241-Cys4257, Cys4259-Cys4268, Cys4273-Cys4283, Cys4277-Cys4293, Cys4295-Cys4304, Cys4309-Cys4319, Cys4313-Cys4329, Cys4331-Cys4340, Cys4345-Cys4353, and Cys4348-Cys4364. Asn4180 carries N-linked (GlcNAc...) asparagine glycosylation. 2 N-linked (GlcNAc...) asparagine glycosylation sites follow: Asn4279 and Asn4280. N-linked (GlcNAc...) asparagine glycosylation is present at Asn4365. 4 disulfide bridges follow: Cys4366–Cys4375, Cys4378–Cys4388, Cys4382–Cys4398, and Cys4400–Cys4409. The chain crosses the membrane as a helical span at residues 4425 to 4445 (ILIPLLLLLLLLLVAGVVFWY). Residues 4446–4545 (KRRVRGAKGF…PEDEIGDPLA (100 aa)) are Cytoplasmic-facing. Residues 4446 to 4545 (KRRVRGAKGF…PEDEIGDPLA (100 aa)) form an interaction with MAFB region. A Phosphothreonine modification is found at Thr4461. Residues 4503–4508 (FTNPVY) carry the NPXY motif motif. Tyr4508 is modified (phosphotyrosine). Phosphoserine occurs at positions 4518, 4521, and 4524.

The protein belongs to the LDLR family. As to quaternary structure, heterodimer of an 85-kDa membrane-bound carboxyl subunit and a non-covalently attached 515-kDa N-terminal subunit. Intracellular domain interacts with MAFB. Found in a complex with PID1/PCLI1, LRP1 and CUBNI. Interacts with SNX17, PID1/PCLI1, PDGF and CUBN. The intracellular domain interacts with SHC1, GULP1 and DAB1. Can weakly interact (via NPXY motif) with DAB2 (via PID domain); the interaction is enhanced by tyrosine phosphorylation of the NPXY motif. Interacts with MDK; promotes neuronal survival. Interacts with LRPAP1; this interaction is followed by rapid internalization. Interacts with uPA/PLAU and PAI1/SERPINE1, either individually or in complex with each other, leading to rapid endocytosis; this interaction is abolished in the presence of LRPAP1/RAP. Also interacts with tPA/PLAT alone or in complex with SERPINE1. Interacts with the urokinase receptor PLAUR; this interaction leads to PLAUR internalization and is impaired in the presence of SORL1. Interacts with PDGFB. Interacts with TAU/MAPT, leading to endocytosis; this interaction is reduced in the presence of LRPAP1/RAP. Interacts with IGFBP3. Interacts with ADGRG6. Post-translationally, phosphorylated on serine and threonine residues. Phosphorylated on tyrosine residues upon stimulation with PDGF. Tyrosine phosphorylation promotes interaction with SHC1. In terms of processing, cleaved into a 85 kDa membrane-spanning subunit (LRP-85) and a 515 kDa large extracellular domain (LRP-515) that remains non-covalently associated. Gamma-secretase-dependent cleavage of LRP-85 releases the intracellular domain from the membrane.

It localises to the cell membrane. Its subcellular location is the membrane. The protein localises to the coated pit. It is found in the golgi outpost. The protein resides in the cytoplasm. It localises to the cytoskeleton. Its subcellular location is the microtubule organizing center. The protein localises to the nucleus. Its function is as follows. Endocytic receptor involved in endocytosis and in phagocytosis of apoptotic cells. Required for early embryonic development. Involved in cellular lipid homeostasis. Involved in the plasma clearance of chylomicron remnants and activated LRPAP1 (alpha 2-macroglobulin), as well as the local metabolism of complexes between plasminogen activators and their endogenous inhibitors. Acts as an alpha-2-macroglobulin receptor. Acts as a TAU/MAPT receptor and controls the endocytosis of TAU/MAPT as well as its subsequent spread. May modulate cellular events, such as APP metabolism, kinase-dependent intracellular signaling, neuronal calcium signaling as well as neurotransmission. Also acts as a receptor for IGFBP3 to mediate cell growth inhibition. In terms of biological role, (Microbial infection) Functions as a receptor for Vibrio cholerae cholix toxin and for Pseudomonas aeruginosa exotoxin A. The polypeptide is Prolow-density lipoprotein receptor-related protein 1 (Mus musculus (Mouse)).